The chain runs to 350 residues: S-adenosylmethionine:tRNA ribosyltransferase-isomerase (350 aa).

This sequence belongs to the QueA family. In terms of assembly, monomer.

It is found in the cytoplasm. The catalysed reaction is 7-aminomethyl-7-carbaguanosine(34) in tRNA + S-adenosyl-L-methionine = epoxyqueuosine(34) in tRNA + adenine + L-methionine + 2 H(+). It functions in the pathway tRNA modification; tRNA-queuosine biosynthesis. Transfers and isomerizes the ribose moiety from AdoMet to the 7-aminomethyl group of 7-deazaguanine (preQ1-tRNA) to give epoxyqueuosine (oQ-tRNA). The protein is S-adenosylmethionine:tRNA ribosyltransferase-isomerase of Vibrio vulnificus (strain CMCP6).